Reading from the N-terminus, the 530-residue chain is UPF0422 protein lpl2888 (530 aa).

The first 19 residues, 1-19 (MKFKKIILALACLSSPLYA), serve as a signal peptide directing secretion. A coiled-coil region spans residues 20-66 (DQDQQLKSEIQRLQHQAEDLQAQLNRLQKQLANHKSSQQKHEQQAAT). The tract at residues 50–81 (LANHKSSQQKHEQQAATKPAEPQSKPTVKSGA) is disordered.

The protein belongs to the UPF0422 family.

This is UPF0422 protein lpl2888 from Legionella pneumophila (strain Lens).